A 276-amino-acid chain; its full sequence is Undecaprenyl-diphosphatase (276 aa).

The next 7 helical transmembrane spans lie at 48 to 68 (AANS…AIVF), 92 to 112 (LTIA…FLFE), 119 to 139 (LFSV…MLIA), 155 to 175 (ITYK…WPGF), 196 to 216 (ADFT…LKLV), 229 to 249 (FFLV…KFFL), and 255 to 275 (IKLV…IMLV).

It belongs to the UppP family.

The protein localises to the cell membrane. The enzyme catalyses di-trans,octa-cis-undecaprenyl diphosphate + H2O = di-trans,octa-cis-undecaprenyl phosphate + phosphate + H(+). Catalyzes the dephosphorylation of undecaprenyl diphosphate (UPP). Confers resistance to bacitracin. This Bacillus velezensis (strain DSM 23117 / BGSC 10A6 / LMG 26770 / FZB42) (Bacillus amyloliquefaciens subsp. plantarum) protein is Undecaprenyl-diphosphatase.